The chain runs to 181 residues: Der GTPase-activating protein YihI (181 aa).

The segment at 1-73 is disordered; that stretch reads MSRIKKARKP…DPRIGSKKPI (73 aa). Residues 22–32 are compositionally biased toward basic and acidic residues; that stretch reads NRTDRDVESRE. The span at 33 to 42 shows a compositional bias: basic residues; that stretch reads LKRKRKRKGL. Over residues 55–67 the composition is skewed to basic and acidic residues; sequence QARRNAQKKDPRI.

The protein belongs to the YihI family. In terms of assembly, interacts with Der.

Its function is as follows. A GTPase-activating protein (GAP) that modifies Der/EngA GTPase function. May play a role in ribosome biogenesis. In Aliivibrio fischeri (strain MJ11) (Vibrio fischeri), this protein is Der GTPase-activating protein YihI.